A 524-amino-acid polypeptide reads, in one-letter code: MGDEFRPSHEERSKMYKSNVRDQNEMRRKRREDEVQIRKNRRDEKFERNRQITVQRSLSHEETSELLKSVADGLQSMQETTIHEALTVLHENLNNTVWTIHVLVKVQILHKLSDVYCNRVISQTTRLLISRTLLKISGIDEVKYERYSSDDRCIQSLVFNISTYGSSEDILCDTFQSIACFIIRSITYRNLALDCAIVSELIDASTINMSIILHRSLMWLVFLFCEKLDRCSPHVDEIAPLLEIISNGIQSTDAMVQTDAASSCASLAEWPPIYHYMSDLKLCSKLVANLRNDKGNARPKVKAGINSIIQATGYFTEEMIDAGLLEVLKGFVNVSYMSQEVCFIISNICVEGEQTIDKLISSGVLREVARVMEASEYRSRREAAFVICHCCASANQKHLEYVVELGMLSAFTDLLTCMDVSLVSYILDAIYLLLQFGEMRLLPDNSNPVAIKLEEIGCREKLEFLCESQSVDIHARAYTIIDRFYVDDDAPLNDDPFAGYQRNNIDDTIEKMIREPIMDQPFSF.

Residues 1–42 (MGDEFRPSHEERSKMYKSNVRDQNEMRRKRREDEVQIRKNRR) form a disordered region. Positions 1–59 (MGDEFRPSHEERSKMYKSNVRDQNEMRRKRREDEVQIRKNRRDEKFERNRQITVQRSLS) constitute an IBB domain.

This sequence belongs to the importin alpha family. In terms of assembly, forms a complex with an importin beta subunit. In terms of tissue distribution, adult germline tissues.

It localises to the cytoplasm. Binds specifically and directly to substrates containing either a simple or bipartite NLS motif. Promotes docking of import substrates to the nuclear envelope. Seems to act as a cytosolic receptor for both simple and bipartite NLS motifs. This is Importin subunit alpha-1 (ima-1) from Caenorhabditis elegans.